We begin with the raw amino-acid sequence, 503 residues long: Discoidin, CUB and LCCL domain-containing protein 1 (503 aa).

Residues 1–25 (MGTGAGGPSVLALLFAVCAPLRLQA) form the signal peptide. Residues 26 to 250 (EELGDGCGHI…FTTPGMNITT (225 aa)) lie on the Extracellular side of the membrane. 4 cysteine pairs are disulfide-bonded: C32–C59, C85–C103, C149–C165, and C169–C191. One can recognise a CUB domain in the interval 32–141 (CGHIVTSQDS…RGFLLTYASS (110 aa)). N55 carries N-linked (GlcNAc...) asparagine glycosylation. An LCCL domain is found at 143 to 239 (HPDLITCLER…RHGSLSEKRF (97 aa)). N247 is a glycosylation site (N-linked (GlcNAc...) asparagine). A helical transmembrane segment spans residues 251–271 (VAIPSVIFIALLLTGMGIFAI). Topologically, residues 272 to 503 (CRKRKKKGNP…LNQTAMTALL (232 aa)) are cytoplasmic. S305 bears the Phosphoserine mark. A Phosphothreonine modification is found at T406. Residues 410-503 (QSGYRVPGPR…LNQTAMTALL (94 aa)) are disordered. The span at 494 to 503 (LNQTAMTALL) shows a compositional bias: polar residues.

The protein resides in the membrane. This is Discoidin, CUB and LCCL domain-containing protein 1 (Dcbld1) from Mus musculus (Mouse).